Here is a 113-residue protein sequence, read N- to C-terminus: Prefoldin subunit beta (113 aa).

The protein belongs to the prefoldin subunit beta family. Heterohexamer of two alpha and four beta subunits.

Its subcellular location is the cytoplasm. Its function is as follows. Molecular chaperone capable of stabilizing a range of proteins. Seems to fulfill an ATP-independent, HSP70-like function in archaeal de novo protein folding. This chain is Prefoldin subunit beta, found in Methanococcus vannielii (strain ATCC 35089 / DSM 1224 / JCM 13029 / OCM 148 / SB).